The sequence spans 270 residues: Flavodoxin/ferredoxin--NADP reductase (270 aa).

Residues 12-113 (VLPDAQTVTS…PKPVGTLVID (102 aa)) enclose the FAD-binding FR-type domain. FAD contacts are provided by residues 62 to 65 (RAYS), 78 to 80 (YSI), and 86 to 88 (PLT). An NADP(+)-binding site is contributed by threonine 126. Threonine 128 serves as a coordination point for FAD. Residues arginine 156, 192 to 193 (TR), arginine 201, and aspartate 238 contribute to the NADP(+) site. 264–270 (AFVGEGI) lines the FAD pocket.

It belongs to the ferredoxin--NADP reductase type 1 family. Monomer. Requires FAD as cofactor.

The protein localises to the cytoplasm. The catalysed reaction is 2 reduced [2Fe-2S]-[ferredoxin] + NADP(+) + H(+) = 2 oxidized [2Fe-2S]-[ferredoxin] + NADPH. It catalyses the reaction reduced [flavodoxin] + NADP(+) = oxidized [flavodoxin] + NADPH + 2 H(+). Functionally, transports electrons between flavodoxin or ferredoxin and NADPH. In Rhodobacter capsulatus (Rhodopseudomonas capsulata), this protein is Flavodoxin/ferredoxin--NADP reductase.